The chain runs to 472 residues: Tryptophanase (472 aa).

Lysine 270 is modified (N6-(pyridoxal phosphate)lysine).

It belongs to the beta-eliminating lyase family. Homotetramer. Requires pyridoxal 5'-phosphate as cofactor.

It carries out the reaction L-tryptophan + H2O = indole + pyruvate + NH4(+). Its pathway is amino-acid degradation; L-tryptophan degradation via pyruvate pathway; indole and pyruvate from L-tryptophan: step 1/1. In Haemophilus influenzae (strain 86-028NP), this protein is Tryptophanase.